A 146-amino-acid polypeptide reads, in one-letter code: Ribonuclease H (146 aa).

In terms of domain architecture, RNase H type-1 spans 1–138 (MYAWTDGACR…ADALANRGID (138 aa)). Mg(2+) is bound by residues aspartate 6, glutamate 44, aspartate 66, and aspartate 130.

Belongs to the RNase H family. Monomer. The cofactor is Mg(2+).

The protein localises to the cytoplasm. The enzyme catalyses Endonucleolytic cleavage to 5'-phosphomonoester.. Endonuclease that specifically degrades the RNA of RNA-DNA hybrids. This chain is Ribonuclease H, found in Alkalilimnicola ehrlichii (strain ATCC BAA-1101 / DSM 17681 / MLHE-1).